The chain runs to 403 residues: Argininosuccinate synthase (403 aa).

ATP contacts are provided by residues 13–21 (AYSGGLDTS) and Ala40. Residues Tyr91 and Ser96 each contribute to the L-citrulline site. Position 121 (Gly121) interacts with ATP. 3 residues coordinate L-aspartate: Thr123, Asn127, and Asp128. Asn127 serves as a coordination point for L-citrulline. 5 residues coordinate L-citrulline: Arg131, Ser180, Ser189, Glu265, and Tyr277.

It belongs to the argininosuccinate synthase family. Type 1 subfamily. As to quaternary structure, homotetramer.

It is found in the cytoplasm. The catalysed reaction is L-citrulline + L-aspartate + ATP = 2-(N(omega)-L-arginino)succinate + AMP + diphosphate + H(+). The protein operates within amino-acid biosynthesis; L-arginine biosynthesis; L-arginine from L-ornithine and carbamoyl phosphate: step 2/3. In Leptospira borgpetersenii serovar Hardjo-bovis (strain JB197), this protein is Argininosuccinate synthase.